A 74-amino-acid chain; its full sequence is Protein SMIM7 homolog (74 aa).

The chain crosses the membrane as a helical span at residues 53-73; sequence FRAFIGLWNIFIMFLMLVFFG.

The protein belongs to the SMIM7 family.

It localises to the membrane. In Ixodes scapularis (Black-legged tick), this protein is Protein SMIM7 homolog.